Reading from the N-terminus, the 289-residue chain is Transmembrane protein 163 (289 aa).

A disordered region spans residues 1–65 (MEPAAGIQRR…ESGQFSDGLE (65 aa)). At 1–88 (MEPAAGIQRR…HEAQNYRKKA (88 aa)) the chain is on the cytoplasmic side. Phosphoserine is present on S11. A compositionally biased stretch (pro residues) spans 16-36 (TVPPPPRGHAPPAAAPGPAPL). The required for interaction with MCOLN1 stretch occupies residues 42–72 (EPPQLEEERQVRISESGQFSDGLEDRGLLES). 3 positions are modified to phosphoserine: S55, S57, and S61. A helical transmembrane segment spans residues 89–109 (LWVSWFSIIVTLALAVAAFTV). The Extracellular segment spans residues 110–116 (SVMRYSA). The helical transmembrane segment at 117 to 137 (SAFGFAFDAILDVLSSAIVLW) threads the bilayer. Residues 138 to 150 (RYSNAAAVHSAHR) are Cytoplasmic-facing. The chain crosses the membrane as a helical span at residues 151-171 (EYIACVILGVIFLLSSICIVV). The Extracellular portion of the chain corresponds to 172–187 (KAIHDLSTRLLPEVDD). Residues 188–208 (FLFSVSILSGILCSILAVLKF) traverse the membrane as a helical segment. The Cytoplasmic segment spans residues 209–217 (MLGKVLTSR). The chain crosses the membrane as a helical span at residues 218-238 (ALITDGFNSLVGGVMGFSILL). The Extracellular segment spans residues 239 to 255 (SAEVFKHDSAVWYLDGS). Residues 256 to 276 (IGVLIGLTIFAYGVKLLIDMV) form a helical membrane-spanning segment. Topologically, residues 277–289 (PRVRQTRHYEMFE) are cytoplasmic.

The protein belongs to the TMEM163 family. In terms of assembly, homodimer. Interacts with MCOLN1/TRPML1. Interacts with SLC30A1, SLC30A2, SLC30A3 and SLC30A4. As to expression, widely expressed. High expression is detected in brain, lung and testis.

Its subcellular location is the cytoplasmic vesicle. The protein resides in the secretory vesicle. It localises to the synaptic vesicle membrane. The protein localises to the early endosome membrane. It is found in the late endosome membrane. Its subcellular location is the lysosome membrane. The protein resides in the cell membrane. It carries out the reaction Zn(2+)(in) = Zn(2+)(out). Zinc ion transporter that mediates zinc efflux and plays a crucial role in intracellular zinc homeostasis. Binds the divalent cations Zn(2+), Ni(2+), and to a minor extent Cu(2+). Is a functional modulator of P2X purinoceptors, including P2RX1, P2RX3, P2RX4 and P2RX7. Plays a role in central nervous system development and is required for myelination, and survival and proliferation of oligodendrocytes. The chain is Transmembrane protein 163 (TMEM163) from Homo sapiens (Human).